Here is a 211-residue protein sequence, read N- to C-terminus: Uracil phosphoribosyltransferase (211 aa).

5-phospho-alpha-D-ribose 1-diphosphate contacts are provided by residues arginine 77, arginine 102, and 129-137 (DPMLATGGS). Uracil is bound by residues isoleucine 192 and 197 to 199 (GDA). Aspartate 198 serves as a coordination point for 5-phospho-alpha-D-ribose 1-diphosphate.

The protein belongs to the UPRTase family. Mg(2+) is required as a cofactor.

It carries out the reaction UMP + diphosphate = 5-phospho-alpha-D-ribose 1-diphosphate + uracil. It participates in pyrimidine metabolism; UMP biosynthesis via salvage pathway; UMP from uracil: step 1/1. With respect to regulation, allosterically activated by GTP. Functionally, catalyzes the conversion of uracil and 5-phospho-alpha-D-ribose 1-diphosphate (PRPP) to UMP and diphosphate. The protein is Uracil phosphoribosyltransferase of Corynebacterium glutamicum (strain R).